A 127-amino-acid polypeptide reads, in one-letter code: uncharacterized protein (127 aa).

This is an uncharacterized protein from Human cytomegalovirus (strain Toledo) (HHV-5).